The following is an 855-amino-acid chain: E3 ubiquitin-protein ligase TRIM71 (855 aa).

Ala-2 is subject to N-acetylalanine. Residues 12 to 94 (CLLCKEMCGS…ALKLRCPVCD (83 aa)) form an RING-type zinc finger. Low complexity predominate over residues 26-42 (SSSSSASSSSSQTSTSS). Disordered stretches follow at residues 26–48 (SSSS…GGGP) and 126–177 (ADEP…SPGS). The span at 135 to 145 (RAGGGPGGAGG) shows a compositional bias: gly residues. Residues 147 to 157 (SNHRHHAHHPA) are compositionally biased toward basic residues. Residues 181 to 228 (RRPHGCSSCDEGNAASSRCLDCQEHLCDNCVRAHQRVRLTKDHYIERG) form a B box-type 1; atypical zinc finger. A B box-type 2 zinc finger spans residues 260–301 (ERLGFCQHHDDEVLHLYCDTCSVPICRECTLGRHGGHSFAYL). Cys-265, His-268, Cys-288, and His-293 together coordinate Zn(2+). The stretch at 378 to 414 (QVKAKSLYLQVEKLRQNLNKLESTISAVQQVLEEGRA) forms a coiled coil. The Filamin repeat unit spans residues 466-567 (SSGAFAPLTK…IENSPFKVVV (102 aa)). 6 NHL repeats span residues 580-623 (VLSF…FKPC), 627-670 (HHKF…FTFE), 674-717 (LLKF…FGPD), 721-764 (LNKY…IHPD), 768-811 (ARFL…FEAN), and 815-855 (LCKF…ILIF).

This sequence belongs to the TRIM/RBCC family. As to quaternary structure, interacts (via NHL repeats) with AGO2; the interaction increases in presence of RNA. Interacts with HSP90AA1. Interacts (via NHL repeats) with MOV10, PABPC1, PUM1, PUM2, STAU2, XRN1 and XRN2 in an RNA-dependent manner. Interacts with SHCBP1; leading to enhance its stability. Post-translationally, autoubiquitinated.

Its subcellular location is the cytoplasm. The protein localises to the P-body. The enzyme catalyses S-ubiquitinyl-[E2 ubiquitin-conjugating enzyme]-L-cysteine + [acceptor protein]-L-lysine = [E2 ubiquitin-conjugating enzyme]-L-cysteine + N(6)-ubiquitinyl-[acceptor protein]-L-lysine.. It participates in protein modification; protein ubiquitination. Its function is as follows. E3 ubiquitin-protein ligase that cooperates with the microRNAs (miRNAs) machinery and promotes embryonic stem cells proliferation and maintenance. Binds to miRNAs and associates with AGO2, participating in post-transcriptional repression of transcripts such as CDKN1A. In addition, participates in post-transcriptional mRNA repression in a miRNA independent mechanism. Facilitates the G1-S transition to promote rapid embryonic stem cell self-renewal by repressing CDKN1A expression. Required to maintain proliferation and prevent premature differentiation of neural progenitor cells during early neural development: positively regulates FGF signaling by controlling the stability of SHCBP1. Specific regulator of miRNA biogenesis. Binds to miRNA MIR29A hairpin and postranscriptionally modulates MIR29A levels, which indirectly regulates TET proteins expression. This Rattus norvegicus (Rat) protein is E3 ubiquitin-protein ligase TRIM71 (Trim71).